A 394-amino-acid polypeptide reads, in one-letter code: Carbamoyl phosphate synthase small chain (394 aa).

Residues Met-1–Arg-188 form a CPSase region. Residues Ser-49, Gly-240, and Gly-242 each coordinate L-glutamine. Residues Arg-192 to Ala-379 form the Glutamine amidotransferase type-1 domain. Cys-267 functions as the Nucleophile in the catalytic mechanism. Positions 268, 271, 309, 311, and 312 each coordinate L-glutamine. Residues His-352 and Glu-354 contribute to the active site.

The protein belongs to the CarA family. In terms of assembly, composed of two chains; the small (or glutamine) chain promotes the hydrolysis of glutamine to ammonia, which is used by the large (or ammonia) chain to synthesize carbamoyl phosphate. Tetramer of heterodimers (alpha,beta)4.

It carries out the reaction hydrogencarbonate + L-glutamine + 2 ATP + H2O = carbamoyl phosphate + L-glutamate + 2 ADP + phosphate + 2 H(+). The enzyme catalyses L-glutamine + H2O = L-glutamate + NH4(+). The protein operates within amino-acid biosynthesis; L-arginine biosynthesis; carbamoyl phosphate from bicarbonate: step 1/1. It participates in pyrimidine metabolism; UMP biosynthesis via de novo pathway; (S)-dihydroorotate from bicarbonate: step 1/3. Small subunit of the glutamine-dependent carbamoyl phosphate synthetase (CPSase). CPSase catalyzes the formation of carbamoyl phosphate from the ammonia moiety of glutamine, carbonate, and phosphate donated by ATP, constituting the first step of 2 biosynthetic pathways, one leading to arginine and/or urea and the other to pyrimidine nucleotides. The small subunit (glutamine amidotransferase) binds and cleaves glutamine to supply the large subunit with the substrate ammonia. This Deinococcus geothermalis (strain DSM 11300 / CIP 105573 / AG-3a) protein is Carbamoyl phosphate synthase small chain.